The primary structure comprises 268 residues: Ribosomal RNA small subunit methyltransferase A (268 aa).

Residues asparagine 23, isoleucine 25, glycine 50, glutamate 72, aspartate 97, and asparagine 116 each coordinate S-adenosyl-L-methionine.

Belongs to the class I-like SAM-binding methyltransferase superfamily. rRNA adenine N(6)-methyltransferase family. RsmA subfamily.

It localises to the cytoplasm. It catalyses the reaction adenosine(1518)/adenosine(1519) in 16S rRNA + 4 S-adenosyl-L-methionine = N(6)-dimethyladenosine(1518)/N(6)-dimethyladenosine(1519) in 16S rRNA + 4 S-adenosyl-L-homocysteine + 4 H(+). Functionally, specifically dimethylates two adjacent adenosines (A1518 and A1519) in the loop of a conserved hairpin near the 3'-end of 16S rRNA in the 30S particle. May play a critical role in biogenesis of 30S subunits. This Rickettsia bellii (strain OSU 85-389) protein is Ribosomal RNA small subunit methyltransferase A.